Consider the following 123-residue polypeptide: Small ribosomal subunit protein uS12 (123 aa).

The segment at 1–32 (MPTINQLIRKPREAQKARDKAPALQSSPQKRG) is disordered. The span at 10–21 (KPREAQKARDKA) shows a compositional bias: basic and acidic residues. A 3-methylthioaspartic acid modification is found at Asp89.

This sequence belongs to the universal ribosomal protein uS12 family. In terms of assembly, part of the 30S ribosomal subunit. Contacts proteins S8 and S17. May interact with IF1 in the 30S initiation complex.

Its function is as follows. With S4 and S5 plays an important role in translational accuracy. In terms of biological role, interacts with and stabilizes bases of the 16S rRNA that are involved in tRNA selection in the A site and with the mRNA backbone. Located at the interface of the 30S and 50S subunits, it traverses the body of the 30S subunit contacting proteins on the other side and probably holding the rRNA structure together. The combined cluster of proteins S8, S12 and S17 appears to hold together the shoulder and platform of the 30S subunit. The polypeptide is Small ribosomal subunit protein uS12 (Azorhizobium caulinodans (strain ATCC 43989 / DSM 5975 / JCM 20966 / LMG 6465 / NBRC 14845 / NCIMB 13405 / ORS 571)).